Consider the following 654-residue polypeptide: Neuroendocrine convertase 2 (654 aa).

An N-terminal signal peptide occupies residues 1 to 21; the sequence is MAAATWSWLLAPFLLLHWASA. A propeptide spanning residues 22 to 121 is cleaved from the precursor; sequence GAGGGAGGSG…VQQPGFKRVK (100 aa). Residues 158–483 form the Peptidase S8 domain; the sequence is QWYLKNTGQN…FGVLDAGAMV (326 aa). Residue Asn-189 is glycosylated (N-linked (GlcNAc...) asparagine). Catalysis depends on charge relay system residues Asp-196 and His-237. Disulfide bonds link Cys-254-Cys-404 and Cys-346-Cys-376. N-linked (GlcNAc...) asparagine glycosylation occurs at Asn-312. Ser-412 serves as the catalytic Charge relay system. Residues 491–627 enclose the P/Homo B domain; that stretch reads SVPPRYHCEA…SLVLHGTKEA (137 aa). Cys-498 and Cys-524 are joined by a disulfide. Asn-544 carries an N-linked (GlcNAc...) asparagine glycan.

Belongs to the peptidase S8 family. Furin subfamily. As to expression, expressed in the central nervous system (CNS) and midgut endocrine cells of third instar larva (at protein level). In the CNS, expressed in the CA-LP1 and CA-LP2 neurons which innervate the corpus allatum, and in the CC-MS2 neurons which innervate the corpora cardiaca of the ring gland. Also expressed in the CC-MS1, SP3, Tv and Va neurons. Expressed in Akh-producing cells of the corpora cardiaca. In the embryo, restricted to the final stages of embryogenesis where expression is found in anterior sensory structures and in only 168 cells in the brain and ventral nerve cord. After larvae hatch, the sensory structures and most cells in the CNS turn off or substantially reduce expression. In third instar larva, expressed at higher levels in the anterior section than in the posterior section. Little expression is detected in the adult head. In the developing eye, expressed at higher levels in pale-type R7 photoreceptor cells than in yellow-type R7 cells although expression is not seen in all pale-type R7 cells. Also expressed in outer photoreceptor cells.

It is found in the secreted. It catalyses the reaction Release of protein hormones and neuropeptides from their precursors, generally by hydrolysis of -Lys-Arg-|- bonds.. Serine endopeptidase which is involved in the processing of hormone and other protein precursors at sites comprised of pairs of basic amino acid residues. Required during embryonic and larval development, probably by proteolytically processing peptide hormones involved in hatching, larval growth and larval molting. Required for the processing and activation of Akh which maintains normal hemolymph sugar levels. Has been shown in one study to be required for processing of sli into slit N-product and slit C-product in the embryo which is necessary for lateral transverse muscle elongation but has been shown in another study not to be required for sli cleavage. Required for larval hatching. Also required for normal larval wandering behavior which occurs prior to pupariation. Required during pupal development for head eversion, leg and wing disk extension, and abdominal differentiation. Required during eye development for R8 photoreceptor cell specification by regulating processing of ligands required for the BMP and activin signaling pathways. In Drosophila melanogaster (Fruit fly), this protein is Neuroendocrine convertase 2.